A 706-amino-acid chain; its full sequence is DNA ligase (706 aa).

NAD(+) contacts are provided by residues 40 to 44, 89 to 90, and Glu120; these read DLQYD and SI. The active-site N6-AMP-lysine intermediate is the Lys122. Arg143, Glu190, Lys306, and Lys330 together coordinate NAD(+). Residues Cys424, Cys427, Cys442, and Cys447 each contribute to the Zn(2+) site. Residues 625–706 form the BRCT domain; the sequence is EANLPLAGKN…FRLRYETEAT (82 aa).

Belongs to the NAD-dependent DNA ligase family. LigA subfamily. It depends on Mg(2+) as a cofactor. Mn(2+) serves as cofactor.

It carries out the reaction NAD(+) + (deoxyribonucleotide)n-3'-hydroxyl + 5'-phospho-(deoxyribonucleotide)m = (deoxyribonucleotide)n+m + AMP + beta-nicotinamide D-nucleotide.. Its function is as follows. DNA ligase that catalyzes the formation of phosphodiester linkages between 5'-phosphoryl and 3'-hydroxyl groups in double-stranded DNA using NAD as a coenzyme and as the energy source for the reaction. It is essential for DNA replication and repair of damaged DNA. The sequence is that of DNA ligase from Rhodopirellula baltica (strain DSM 10527 / NCIMB 13988 / SH1).